A 354-amino-acid polypeptide reads, in one-letter code: MIRSSVDRIMLHVCLALLPTTAWGLYLFGWPAIYLWLLTCASAVACEAACLYLLGRPLRRLLDGSALLSGWLLALTLPPWAPWWIAVGGSMFAIGIGKQLYGGVGQNVFNPAMLARVALLIAFPLQMTTWALPLPLGTEGAPGWLEGLRITFAGGALADGLSGATALGHLQTELTLGHSAAQILDGHFALLPAFLGYSGGSLGETSELLILLGGLWLLALRIIHWEIPLGMLLTVGALAALANQIDPQVHGGGLFHLTSGGLLLGALFIATDPVTSPISRSGRLIFAIGCGALVFVIRSWGNFPEAVAFAVLLMNALVPLIDRVCRPRAYGRNARGKPLVAAKWTRQVKEVDKV.

Transmembrane regions (helical) follow at residues 9–28, 67–87, and 117–137; these read IMLHVCLALLPTTAWGLYLF, LLSGWLLALTLPPWAPWWIAV, and VALLIAFPLQMTTWALPLPLG. Threonine 165 is modified (FMN phosphoryl threonine). 5 helical membrane-spanning segments follow: residues 200-220, 222-242, 249-269, 277-297, and 301-321; these read GSLGETSELLILLGGLWLLAL, IIHWEIPLGMLLTVGALAALA, VHGGGLFHLTSGGLLLGALFI, PISRSGRLIFAIGCGALVFVI, and GNFPEAVAFAVLLMNALVPLI.

The protein belongs to the NqrB/RnfD family. In terms of assembly, the complex is composed of six subunits: RnfA, RnfB, RnfC, RnfD, RnfE and RnfG. FMN is required as a cofactor.

Its subcellular location is the cell inner membrane. Functionally, part of a membrane-bound complex that couples electron transfer with translocation of ions across the membrane. The sequence is that of Ion-translocating oxidoreductase complex subunit D from Stutzerimonas stutzeri (Pseudomonas stutzeri).